A 149-amino-acid polypeptide reads, in one-letter code: Large ribosomal subunit protein uL15 (149 aa).

Positions 1–52 (MSELLKLHHLRPAPGSNKAKIRKGRGEASKGKTAGRGTKGTKARSTVPAGFE) are disordered.

It belongs to the universal ribosomal protein uL15 family. In terms of assembly, part of the 50S ribosomal subunit.

Functionally, binds to the 23S rRNA. This is Large ribosomal subunit protein uL15 from Thermobifida fusca (strain YX).